A 610-amino-acid polypeptide reads, in one-letter code: MSSSTGPAPASASPVQANRGNSPNILPLLYTSQLGMDSQTICIPSPYVEACQDYSPPHGGEISHGALTLYSPVSSPVLGYTHPPVSESLVPLNSAIFWPPHPTHSTPSLHCPSPLAYRETHAHTTWEDAKTHINQSSSVLTHAKLLGQQLDGDDGLNPSPGILGKGDTHFCAVCHDYASGYHYGVWSCEGCKAFFKRSIQGHNDYICPATNQCTIDKSRRKSCQACRLRKCYEVGMMKCGVRRERCSYRGGRHRRNPPIRDSSGGAIGVRGHSQPHLEFPLSPTHPLFPLGDRAEGCGQNLSPEQLVNCILEAEPPQIYLREPIKKPYTEASMMMSLTNLADKELVLMISWAKKIPGFVELTLSDQVHLLECCWLDILMLGLMWRSVDHPGKLIFSPDLKLNRDEGTCVEGIMEIFDMLLATTSRFRELKLQREEYVCLKAMILLNSSNCSRLPQTPEDVESRGKVLRLLDSVTDALVWTISRTGLSSHQQSIRLAHLLMLLSHIRHLSNKGIEHLSTMKRKNVVLLYDLLLEMLDANTSQSSRMLAAHTKASLRMDTQQTTEILHTSKQQPALKESNQDTRHSPQAEGTVDKTLHRVDKTLHRVDVDTD.

Residues 1 to 170 form a modulating region; it reads MSSSTGPAPA…GILGKGDTHF (170 aa). NR C4-type zinc fingers lie at residues 171–191 and 207–231; these read CAVC…CEGC and CPAT…LRKC. Positions 171-236 form a DNA-binding region, nuclear receptor; the sequence is CAVCHDYASG…RLRKCYEVGM (66 aa). The region spanning 302-538 is the NR LBD domain; that stretch reads SPEQLVNCIL…DLLLEMLDAN (237 aa). The disordered stretch occupies residues 566 to 596; the sequence is HTSKQQPALKESNQDTRHSPQAEGTVDKTLH. A compositionally biased stretch (basic and acidic residues) spans 577 to 596; it reads SNQDTRHSPQAEGTVDKTLH.

Belongs to the nuclear hormone receptor family. NR3 subfamily. As to quaternary structure, binds DNA as a homodimer. Can form a heterodimer with ER-alpha. As to expression, predominantly expressed in pituitary, telencephalon and hypothalamus as well as in the liver.

The protein resides in the nucleus. In terms of biological role, binds estrogens with an affinity similar to that of ER-alpha, and activates expression of reporter genes containing estrogen response elements (ERE) in an estrogen-dependent manner. The polypeptide is Estrogen receptor beta-2 (esr2b) (Carassius auratus (Goldfish)).